A 99-amino-acid polypeptide reads, in one-letter code: MMNMQSMMKQAQKLQKQMQVSQEEIANTTFVGKSAQDLVTVEFSGDRTLKSLDIKPDVIDPEDPETLQDMVTDAVNDALSQIEKVTEQKLGKFTKGLPF.

This sequence belongs to the YbaB/EbfC family. As to quaternary structure, homodimer.

It localises to the cytoplasm. Its subcellular location is the nucleoid. Functionally, binds to DNA and alters its conformation. May be involved in regulation of gene expression, nucleoid organization and DNA protection. The protein is Nucleoid-associated protein LL0120 (ybcG) of Lactococcus lactis subsp. lactis (strain IL1403) (Streptococcus lactis).